We begin with the raw amino-acid sequence, 326 residues long: Serine protease 38 (326 aa).

The N-terminal stretch at 1–32 (MAAPASVMGPLGPSALGLLLLLLVVAPPRVAA) is a signal peptide. Residues 33-59 (LVHRQPENQGISLTGSVACGRPSMEGK) constitute a propeptide, activation peptide. Positions 60–293 (ILGGVPAPER…FSKWICDNIE (234 aa)) constitute a Peptidase S1 domain. Residues Cys-85 and Cys-101 are joined by a disulfide bond. The active-site Charge relay system is His-100. N-linked (GlcNAc...) asparagine glycosylation is present at Asn-125. Asp-150 acts as the Charge relay system in catalysis. Disulfide bonds link Cys-183–Cys-251, Cys-214–Cys-230, and Cys-241–Cys-269. Ser-245 serves as the catalytic Charge relay system.

This sequence belongs to the peptidase S1 family.

Its subcellular location is the secreted. The polypeptide is Serine protease 38 (PRSS38) (Homo sapiens (Human)).